The following is a 293-amino-acid chain: Protein translocase subunit SecF (293 aa).

Transmembrane regions (helical) follow at residues 10–30, 130–150, 158–178, 185–205, 244–264, and 267–287; these read ARIFFSITAVVLIVGIVSMFA, VKSAVGAVVLSWVLMIIYITI, LAAIVALIIDVMVTLTWFSVL, SFVAALLTVVGYSVNGTIVVF, LFAVVAIFLFGGETIHNFSFA, and VGFCSGFYTSTFLAGSMWLFF.

This sequence belongs to the SecD/SecF family. SecF subfamily. In terms of assembly, forms a complex with SecD. Part of the essential Sec protein translocation apparatus which comprises SecA, SecYEG and auxiliary proteins SecDF. Other proteins may also be involved.

It localises to the cell membrane. In terms of biological role, part of the Sec protein translocase complex. Interacts with the SecYEG preprotein conducting channel. SecDF uses the proton motive force (PMF) to complete protein translocation after the ATP-dependent function of SecA. In Acidaminococcus fermentans (strain ATCC 25085 / DSM 20731 / CCUG 9996 / CIP 106432 / VR4), this protein is Protein translocase subunit SecF.